Reading from the N-terminus, the 745-residue chain is Serine/threonine-protein kinase GG21441 (745 aa).

Positions 49 to 73 (RNQQQNVQKDFDSHNRDCDSPVSST) are disordered. A compositionally biased stretch (basic and acidic residues) spans 57-67 (KDFDSHNRDCD). 2 Doublecortin domains span residues 159–245 (LRIK…VEYN) and 315–398 (RIVT…AEDF). The 259-residue stretch at 479–737 (YTLGRIIGDG…SEDILDHYWT (259 aa)) folds into the Protein kinase domain. Residues 485 to 493 (IGDGNFAIV) and Lys-508 contribute to the ATP site. The active-site Proton acceptor is the Asp-600.

It belongs to the protein kinase superfamily. CAMK Ser/Thr protein kinase family. CaMK subfamily.

The catalysed reaction is L-seryl-[protein] + ATP = O-phospho-L-seryl-[protein] + ADP + H(+). It catalyses the reaction L-threonyl-[protein] + ATP = O-phospho-L-threonyl-[protein] + ADP + H(+). This is Serine/threonine-protein kinase GG21441 from Drosophila erecta (Fruit fly).